The following is a 316-amino-acid chain: tRNA dimethylallyltransferase (316 aa).

17-24 (GPTASGKT) lines the ATP pocket. Position 19-24 (19-24 (TASGKT)) interacts with substrate. 3 interaction with substrate tRNA regions span residues 42-45 (DSAL), 166-170 (QRLSR), and 247-252 (RCVGYR).

Belongs to the IPP transferase family. Monomer. Mg(2+) is required as a cofactor.

It carries out the reaction adenosine(37) in tRNA + dimethylallyl diphosphate = N(6)-dimethylallyladenosine(37) in tRNA + diphosphate. In terms of biological role, catalyzes the transfer of a dimethylallyl group onto the adenine at position 37 in tRNAs that read codons beginning with uridine, leading to the formation of N6-(dimethylallyl)adenosine (i(6)A). The protein is tRNA dimethylallyltransferase of Salmonella paratyphi A (strain ATCC 9150 / SARB42).